A 198-amino-acid chain; its full sequence is Nucleoid occlusion factor SlmA (198 aa).

Positions 9 to 70 constitute an HTH tetR-type domain; sequence RNRREEILQA…SLIEFIEDSL (62 aa). A DNA-binding region (H-T-H motif) is located at residues 33–52; it reads TTAKLAANVGVSEAALYRHF. Residues 119-144 are a coiled coil; the sequence is DRLQGRINQLFERIEMQLRQVLREKK.

It belongs to the nucleoid occlusion factor SlmA family. Homodimer. Interacts with FtsZ.

The protein resides in the cytoplasm. It is found in the nucleoid. Functionally, required for nucleoid occlusion (NO) phenomenon, which prevents Z-ring formation and cell division over the nucleoid. Acts as a DNA-associated cell division inhibitor that binds simultaneously chromosomal DNA and FtsZ, and disrupts the assembly of FtsZ polymers. SlmA-DNA-binding sequences (SBS) are dispersed on non-Ter regions of the chromosome, preventing FtsZ polymerization at these regions. This is Nucleoid occlusion factor SlmA from Yersinia pseudotuberculosis serotype I (strain IP32953).